Consider the following 311-residue polypeptide: Olfactory receptor 2Y1 (311 aa).

Topologically, residues 1–25 are extracellular; the sequence is MGSFNTSFEDGFILVGFSDWPQLEP. An N-linked (GlcNAc...) asparagine glycan is attached at Asn5. Residues 26–49 traverse the membrane as a helical segment; it reads ILFVFIFIFYSLTLFGNTIIIALS. Over 50-57 the chain is Cytoplasmic; the sequence is WLDLRLHT. Residues 58–79 traverse the membrane as a helical segment; sequence PMYFFLSHLSLLDLCFTTSTVP. Topologically, residues 80–100 are extracellular; sequence QLLINLCGVDRTITRGGCVAQ. The cysteines at positions 97 and 188 are disulfide-linked. A helical membrane pass occupies residues 101–120; it reads LFIYLALGSTECVLLVVMAF. The Cytoplasmic portion of the chain corresponds to 121-139; it reads DRYAAVCRPLHYMAIMHPH. The chain crosses the membrane as a helical span at residues 140–158; sequence LCQTLAIASWGAGFVNSLI. Residues 159 to 194 lie on the Extracellular side of the membrane; sequence QTGLAMAMPLCGHRLNHFFCEMPVFLKLACADTEGT. A helical membrane pass occupies residues 195–218; the sequence is EAKMFVARVIVVAVPAALILGSYV. Residues 219-235 are Cytoplasmic-facing; it reads HIAHAVLRVKSTAGRRK. The chain crosses the membrane as a helical span at residues 236–258; the sequence is AFGTCGSHLLVVFLFYGSAIYTY. The Extracellular segment spans residues 259 to 271; the sequence is LQSIHNYSEREGK. An N-linked (GlcNAc...) asparagine glycan is attached at Asn264. Residues 272–291 form a helical membrane-spanning segment; the sequence is FVALFYTIITPILNPLIYTL. Topologically, residues 292 to 311 are cytoplasmic; sequence RNKDVKGALWKVLWRGRDSG.

This sequence belongs to the G-protein coupled receptor 1 family.

It localises to the cell membrane. Odorant receptor. The chain is Olfactory receptor 2Y1 (OR2Y1) from Homo sapiens (Human).